The following is a 31-amino-acid chain: Cytochrome b6-f complex subunit 6 (31 aa).

A helical transmembrane segment spans residues 4-26 (ITSYFGFLLAALTITPALLISLN).

It belongs to the PetL family. As to quaternary structure, the 4 large subunits of the cytochrome b6-f complex are cytochrome b6, subunit IV (17 kDa polypeptide, PetD), cytochrome f and the Rieske protein, while the 4 small subunits are PetG, PetL, PetM and PetN. The complex functions as a dimer.

Its subcellular location is the plastid. The protein resides in the chloroplast thylakoid membrane. Functionally, component of the cytochrome b6-f complex, which mediates electron transfer between photosystem II (PSII) and photosystem I (PSI), cyclic electron flow around PSI, and state transitions. PetL is important for photoautotrophic growth as well as for electron transfer efficiency and stability of the cytochrome b6-f complex. This chain is Cytochrome b6-f complex subunit 6, found in Dioscorea elephantipes (Elephant's foot yam).